A 114-amino-acid chain; its full sequence is Putative membrane protein insertion efficiency factor (114 aa).

Belongs to the UPF0161 family.

It localises to the cell inner membrane. Its function is as follows. Could be involved in insertion of integral membrane proteins into the membrane. The sequence is that of Putative membrane protein insertion efficiency factor from Nitrobacter hamburgensis (strain DSM 10229 / NCIMB 13809 / X14).